The primary structure comprises 414 residues: Esterase FrsA (414 aa).

Belongs to the FrsA family.

The enzyme catalyses a carboxylic ester + H2O = an alcohol + a carboxylate + H(+). Its function is as follows. Catalyzes the hydrolysis of esters. In Shigella sonnei (strain Ss046), this protein is Esterase FrsA.